The chain runs to 301 residues: Probable porphobilinogen deaminase (301 aa).

Cys-241 bears the S-(dipyrrolylmethanemethyl)cysteine mark.

It belongs to the HMBS family. Requires dipyrromethane as cofactor.

The enzyme catalyses 4 porphobilinogen + H2O = hydroxymethylbilane + 4 NH4(+). It participates in porphyrin-containing compound metabolism; protoporphyrin-IX biosynthesis; coproporphyrinogen-III from 5-aminolevulinate: step 2/4. Functionally, tetrapolymerization of the monopyrrole PBG into the hydroxymethylbilane pre-uroporphyrinogen in several discrete steps. The sequence is that of Probable porphobilinogen deaminase from Pyrobaculum islandicum (strain DSM 4184 / JCM 9189 / GEO3).